A 405-amino-acid polypeptide reads, in one-letter code: Protein NCA1 (405 aa).

Residues 1–85 (MTTTSVCPFS…GNLNKDSTDS (85 aa)) are disordered. 2 stretches are compositionally biased toward basic and acidic residues: residues 13-24 (ARPDDGSTRKQG) and 37-48 (ARPDDASARKQG). The span at 76 to 85 (GNLNKDSTDS) shows a compositional bias: polar residues. The RING-type zinc finger occupies 108–142 (CMLCQALLYESSRCVPCTHVFCKVCLTRFKDCPLC). TPR repeat units follow at residues 247 to 280 (GAVLGMLGDCSRAMGDSSSAVKHFEESVEFLMKL) and 292 to 325 (SVSLNKIGDLKYYDEDLQAARSYYDRALNVRRDA).

Interacts with the catalases CAT1, CAT2 and CAT3. This interaction is not induced by alkaline stress or H(2)O(2) and NaCl treatments. Expressed in roots, stems, leaves, flowers and siliques.

The protein resides in the cytoplasm. The protein localises to the nucleus. Its function is as follows. Has holdase chaperone activity that may fold catalase to a functional structure. Not required for the peroxisome import of catalases. Required for the activity of catalases and acts mainly at the post-transcriptional level. In Arabidopsis thaliana (Mouse-ear cress), this protein is Protein NCA1.